Here is a 376-residue protein sequence, read N- to C-terminus: Inactive CLIP domain-containing serine protease A28 (376 aa).

Positions 1–19 (MKVLLFCIVISLTTLIASG) are cleaved as a signal peptide. In terms of domain architecture, Clip spans 24–80 (EELRCPGGYCVSKYLCPNGTFIDDIKHAQTTQLIGLRAGLDIDDFDDCNDYLLVCCQ). Disulfide bonds link cysteine 28/cysteine 78, cysteine 33/cysteine 71, and cysteine 39/cysteine 79. N-linked (GlcNAc...) asparagine glycosylation occurs at asparagine 41. Residues 85-106 (PTATSTEKPATSDELIEPPPST) are disordered. Residues 114-364 (NEGGLIYDLR…YVQWLNEHIV (251 aa)) form the Peptidase S1 domain. N-linked (GlcNAc...) asparagine glycosylation is found at asparagine 125 and asparagine 279. 3 disulfides stabilise this stretch: cysteine 251/cysteine 321, cysteine 280/cysteine 301, and cysteine 311/cysteine 340. N-linked (GlcNAc...) asparagine glycosylation occurs at asparagine 369.

It belongs to the peptidase S1 family. CLIP subfamily. In terms of assembly, may form a heterodimer of a light chain and a heavy chain; disulfide-linked. Post-translationally, secreted as a full-length protein. Proteolytically cleaved into two chains which probably remain covalently linked. Cleavage is induced by fungus B.bassiana and Gram-positive or Gram-negative bacteria infection.

It is found in the secreted. Inactive serine protease which plays an essential role in the innate immune response against bacteria, fungi and protozoa infection by activating the melanization cascade. In the melanization cascade, acts downstream of TEP1, SPCLIP1 and CLIPA8 to promote CLIPC9 proteolytic cleavage. In the susceptible strain G3, appears to be dispensable for parasite P.berghei ookinete elimination which occurs by lysis. Required for the melanization of Gram-positive and Gram-negative bacteria. Required for the melanization of fungus B.bassiana. This chain is Inactive CLIP domain-containing serine protease A28, found in Anopheles gambiae (African malaria mosquito).